We begin with the raw amino-acid sequence, 193 residues long: Superoxide dismutase [Fe] (193 aa).

Position 27 (His27) interacts with Fe cation. Lys51 carries the post-translational modification N6-acetyllysine. His74, Asp157, and His161 together coordinate Fe cation.

It belongs to the iron/manganese superoxide dismutase family. Homodimer. Fe cation is required as a cofactor.

It carries out the reaction 2 superoxide + 2 H(+) = H2O2 + O2. Functionally, destroys superoxide anion radicals which are normally produced within the cells and which are toxic to biological systems. In Escherichia coli O157:H7, this protein is Superoxide dismutase [Fe] (sodB).